A 254-amino-acid chain; its full sequence is Hydroxyacylglutathione hydrolase (254 aa).

Zn(2+)-binding residues include histidine 54, histidine 56, aspartate 58, histidine 59, histidine 111, aspartate 130, and histidine 168.

This sequence belongs to the metallo-beta-lactamase superfamily. Glyoxalase II family. Monomer. The cofactor is Zn(2+).

The catalysed reaction is an S-(2-hydroxyacyl)glutathione + H2O = a 2-hydroxy carboxylate + glutathione + H(+). Its pathway is secondary metabolite metabolism; methylglyoxal degradation; (R)-lactate from methylglyoxal: step 2/2. Functionally, thiolesterase that catalyzes the hydrolysis of S-D-lactoyl-glutathione to form glutathione and D-lactic acid. The chain is Hydroxyacylglutathione hydrolase from Legionella pneumophila (strain Lens).